A 335-amino-acid polypeptide reads, in one-letter code: Anthranilate phosphoribosyltransferase (335 aa).

5-phospho-alpha-D-ribose 1-diphosphate contacts are provided by residues Gly-79, 82-83 (GD), Ser-87, 89-92 (NIST), 107-115 (KHGNRSITS), and Ser-119. Gly-79 serves as a coordination point for anthranilate. Mg(2+) is bound at residue Ser-91. Asn-110 serves as a coordination point for anthranilate. An anthranilate-binding site is contributed by Arg-165. Mg(2+) contacts are provided by Asp-224 and Glu-225.

Belongs to the anthranilate phosphoribosyltransferase family. As to quaternary structure, homodimer. Mg(2+) is required as a cofactor.

The enzyme catalyses N-(5-phospho-beta-D-ribosyl)anthranilate + diphosphate = 5-phospho-alpha-D-ribose 1-diphosphate + anthranilate. Its pathway is amino-acid biosynthesis; L-tryptophan biosynthesis; L-tryptophan from chorismate: step 2/5. In terms of biological role, catalyzes the transfer of the phosphoribosyl group of 5-phosphorylribose-1-pyrophosphate (PRPP) to anthranilate to yield N-(5'-phosphoribosyl)-anthranilate (PRA). The protein is Anthranilate phosphoribosyltransferase of Lactococcus lactis subsp. lactis (strain IL1403) (Streptococcus lactis).